The primary structure comprises 190 residues: Large ribosomal subunit protein bL17 (190 aa).

A compositionally biased stretch (low complexity) spans 135–165; the sequence is AKAAPAAEEAPAEEAPAAEEAATEEAPAAEE. The disordered stretch occupies residues 135–190; it reads AKAAPAAEEAPAEEAPAAEEAATEEAPAAEETATEEAAAEEAPAAEEAPAEEKDAK.

Belongs to the bacterial ribosomal protein bL17 family. As to quaternary structure, part of the 50S ribosomal subunit. Contacts protein L32.

The polypeptide is Large ribosomal subunit protein bL17 (Pseudarthrobacter chlorophenolicus (strain ATCC 700700 / DSM 12829 / CIP 107037 / JCM 12360 / KCTC 9906 / NCIMB 13794 / A6) (Arthrobacter chlorophenolicus)).